Here is a 31-residue protein sequence, read N- to C-terminus: Ranatuerin-2 (31 aa).

The cysteines at positions 23 and 28 are disulfide-linked.

This sequence belongs to the frog skin active peptide (FSAP) family. Ranatuerin subfamily. As to expression, expressed by the skin glands.

It is found in the secreted. Its function is as follows. Antibacterial activity against Gram-positive bacterium S.aureus (MIC=60 uM). Shows no detectable hemolytic activity towards human erythrocytes. The polypeptide is Ranatuerin-2 (Aquarana catesbeiana (American bullfrog)).